Here is an 803-residue protein sequence, read N- to C-terminus: Myb-like protein V (803 aa).

2 disordered regions span residues 237–333 (SNIY…LPGL) and 429–803 (KSTS…SRRK). Residues 258–323 (DANDKNENNN…ENNKNKRTKS (66 aa)) adopt a coiled-coil conformation. Over residues 271–294 (DDADDAAADDADDADDDDMDDESD) the composition is skewed to acidic residues. Residues 295-315 (SNNNNKNSNNKNSNNKNSNEN) are compositionally biased toward low complexity. The Myb-like domain occupies 332-379 (GLWTDEECRSLIKAVMIIGHRWIKIKEDYYSTSKRKPSQLKDKMRSLR). 2 coiled-coil regions span residues 400–429 (EIEKLAVLFQQKEEAQKLAKEKIDSLSNIK) and 463–496 (NNEDNQNESESENEDENDNNEKEKEKRNKKNSAV). Positions 429 to 438 (KSTSNTSAAS) are enriched in polar residues. Composition is skewed to acidic residues over residues 448-480 (NDSDEEVDQDSDNDSNNEDNQNESESENEDEND) and 510-533 (EEEESDEEHNDSEEDSQEDSEENE). Composition is skewed to basic residues over residues 537-553 (KQKRKSNQIKSSPKKLK) and 568-577 (HKSKLKSKPQ). Residues 573 to 616 (KSKPQRKVEKEESEKEESEEEESEEEEEEDDEDYESEEDKKKKK) are a coiled coil. Acidic residues predominate over residues 586-609 (EKEESEEEESEEEEEEDDEDYESE). Low complexity-rich tracts occupy residues 625–636 (TSTHTTTTTTTT) and 666–733 (KKSN…PTKK). Basic and acidic residues predominate over residues 786-795 (LNKDSKENKK).

In Dictyostelium discoideum (Social amoeba), this protein is Myb-like protein V (mybV).